A 400-amino-acid polypeptide reads, in one-letter code: TBC1 domain family member 13 (400 aa).

Positions 35-345 (PCEGGLRCLC…RIWDSLFADD (311 aa)) constitute a Rab-GAP TBC domain.

In terms of assembly, interacts with RAB1A and RAB10; in a GTP-dependent manner.

It is found in the membrane. Its subcellular location is the cytoplasm. Functionally, acts as a GTPase-activating protein for RAB35. Together with RAB35 may be involved in regulation of insulin-induced glucose transporter SLC2A4/GLUT4 translocation to the plasma membrane in adipocytes. The polypeptide is TBC1 domain family member 13 (TBC1D13) (Homo sapiens (Human)).